A 230-amino-acid polypeptide reads, in one-letter code: MKDLPIIALDFESKEKVNRFLDLFDESLFVKVGMELFYQEGPQLINEIKERGHDVFLDLKLHDIPNTVGKAMEGLAKLNVDLVNVHAAGGVKMMSEAIKGLRKHNEHTKIIAVTQLTSTTEDMLRHEQNIQTSIEEAVLNYAKLANATGLDGVVCSPLESRMLTEKLGASFLKVTPGIRPKGASQDDQHRITTPEEARQLGSTHIVVGRPITQSDNPVESYHKIKESWLV.

Residues Asp-10, Lys-31, 58-67 (DLKLHDIPNT), Thr-117, Arg-179, Gln-188, Gly-208, and Arg-209 each bind substrate. Lys-60 (proton donor) is an active-site residue.

It belongs to the OMP decarboxylase family. Type 1 subfamily. As to quaternary structure, homodimer.

The enzyme catalyses orotidine 5'-phosphate + H(+) = UMP + CO2. Its pathway is pyrimidine metabolism; UMP biosynthesis via de novo pathway; UMP from orotate: step 2/2. Functionally, catalyzes the decarboxylation of orotidine 5'-monophosphate (OMP) to uridine 5'-monophosphate (UMP). The sequence is that of Orotidine 5'-phosphate decarboxylase from Staphylococcus aureus (strain bovine RF122 / ET3-1).